The following is a 387-amino-acid chain: Succinate--CoA ligase [ADP-forming] subunit beta (387 aa).

ATP is bound by residues Lys46, 53–55 (GRG), Glu99, Ala102, and Glu107. Residues Asn199 and Asp213 each coordinate Mg(2+). Substrate is bound by residues Asn264 and 321–323 (GIV).

This sequence belongs to the succinate/malate CoA ligase beta subunit family. Heterotetramer of two alpha and two beta subunits. Mg(2+) is required as a cofactor.

The catalysed reaction is succinate + ATP + CoA = succinyl-CoA + ADP + phosphate. It carries out the reaction GTP + succinate + CoA = succinyl-CoA + GDP + phosphate. Its pathway is carbohydrate metabolism; tricarboxylic acid cycle; succinate from succinyl-CoA (ligase route): step 1/1. Succinyl-CoA synthetase functions in the citric acid cycle (TCA), coupling the hydrolysis of succinyl-CoA to the synthesis of either ATP or GTP and thus represents the only step of substrate-level phosphorylation in the TCA. The beta subunit provides nucleotide specificity of the enzyme and binds the substrate succinate, while the binding sites for coenzyme A and phosphate are found in the alpha subunit. In Campylobacter jejuni subsp. doylei (strain ATCC BAA-1458 / RM4099 / 269.97), this protein is Succinate--CoA ligase [ADP-forming] subunit beta.